A 640-amino-acid polypeptide reads, in one-letter code: 1,4-alpha-glucan branching enzyme GlgB (640 aa).

The active-site Nucleophile is aspartate 318. The active-site Proton donor is glutamate 371.

Belongs to the glycosyl hydrolase 13 family. GlgB subfamily. Monomer.

The catalysed reaction is Transfers a segment of a (1-&gt;4)-alpha-D-glucan chain to a primary hydroxy group in a similar glucan chain.. Its pathway is glycan biosynthesis; glycogen biosynthesis. In terms of biological role, catalyzes the formation of the alpha-1,6-glucosidic linkages in glycogen by scission of a 1,4-alpha-linked oligosaccharide from growing alpha-1,4-glucan chains and the subsequent attachment of the oligosaccharide to the alpha-1,6 position. This chain is 1,4-alpha-glucan branching enzyme GlgB, found in Francisella tularensis subsp. holarctica (strain FTNF002-00 / FTA).